Here is a 226-residue protein sequence, read N- to C-terminus: Translation initiation factor IF-3 (226 aa).

The disordered stretch occupies residues 195-226; it reads FVPLAPLSPEDLIEEPELESESDSDAEPESDN. The span at 205 to 226 shows a compositional bias: acidic residues; it reads DLIEEPELESESDSDAEPESDN.

The protein belongs to the IF-3 family. As to quaternary structure, monomer.

It is found in the cytoplasm. IF-3 binds to the 30S ribosomal subunit and shifts the equilibrium between 70S ribosomes and their 50S and 30S subunits in favor of the free subunits, thus enhancing the availability of 30S subunits on which protein synthesis initiation begins. This chain is Translation initiation factor IF-3, found in Chlorobium chlorochromatii (strain CaD3).